The sequence spans 1013 residues: Poly [ADP-ribose] polymerase 1 (1013 aa).

PARP-type zinc fingers lie at residues Y10–G92 and F113–K203. Zn(2+) contacts are provided by C22, C25, H54, C57, C125, C128, H159, and C162. The disordered stretch occupies residues V202–L228. The short motif at K207–K209 is the Nuclear localization signal element. The PADR1 zinc-binding domain maps to K219 to K353. A zinc ribbon region spans residues G284–D326. Positions 289, 292, 305, and 315 each coordinate Zn(2+). Residues K353–P385 form a disordered region. Positions P356–S378 are enriched in low complexity. Positions G365–K523 are automodification domain. A BRCT domain is found at P385–D461. PolyADP-ribosyl glutamic acid occurs at positions 413, 435, 444, 445, 464, 471, 484, and 488. Over residues A494–T507 the composition is skewed to low complexity. Residues A494 to M522 form a disordered region. E512 and E513 each carry polyADP-ribosyl glutamic acid. Positions C541–F637 constitute a WGR domain. The PARP alpha-helical domain maps to K661–R778. Positions D787–W1013 constitute a PARP catalytic domain. NAD(+) contacts are provided by residues H861 to S863, G870, R877, and S903. Catalysis depends on E987, which acts as the For poly [ADP-ribose] polymerase activity.

It belongs to the ARTD/PARP family. In terms of assembly, homodimer; PARP-type zinc-fingers from separate parp1 molecules form a dimer module that specifically recognizes DNA strand breaks. Poly-ADP-ribosylated on serine, glutamate and aspartate residues by autocatalysis. Auto-ADP-ribosylation on serine takes place following interaction with HPF1. Auto poly-ADP-ribosylation on serine residues promotes its dissociation from chromatin.

Its subcellular location is the chromosome. The protein resides in the nucleus. The protein localises to the nucleolus. It is found in the cytoplasm. It localises to the cytosol. The catalysed reaction is NAD(+) + (ADP-D-ribosyl)n-acceptor = nicotinamide + (ADP-D-ribosyl)n+1-acceptor + H(+).. It carries out the reaction L-seryl-[protein] + NAD(+) = O-(ADP-D-ribosyl)-L-seryl-[protein] + nicotinamide + H(+). The enzyme catalyses L-aspartyl-[protein] + NAD(+) = 4-O-(ADP-D-ribosyl)-L-aspartyl-[protein] + nicotinamide. It catalyses the reaction L-glutamyl-[protein] + NAD(+) = 5-O-(ADP-D-ribosyl)-L-glutamyl-[protein] + nicotinamide. The catalysed reaction is L-tyrosyl-[protein] + NAD(+) = O-(ADP-D-ribosyl)-L-tyrosyl-[protein] + nicotinamide + H(+). It carries out the reaction L-histidyl-[protein] + NAD(+) = N(tele)-(ADP-D-ribosyl)-L-histidyl-[protein] + nicotinamide + H(+). Its activity is regulated as follows. ADP-ribosyltransferase activity is regulated via an allosteric activation mechanism. In absence of activation signal, parp1 is autoinhibited by the PARP alpha-helical domain (also named HD region), which prevents effective NAD(+)-binding. Activity is highly stimulated by signals, such as DNA strand breaks. Binding to damaged DNA unfolds the PARP alpha-helical domain, relieving autoinhibition. Poly-ADP-ribosyltransferase activity is tightly regulated and parp1 is removed from damaged chromatin following initial poly-ADP-ribosylation of chromatin to avoid prolonged residence (trapping) that has cytotoxic consequences. A number of factors or post-translational modifications (auto-poly-ADP-ribosylation) promote parp1 removal from chromatin. Its function is as follows. Poly-ADP-ribosyltransferase that mediates poly-ADP-ribosylation of proteins and plays a key role in DNA repair. Mediates glutamate, aspartate, serine, histidine or tyrosine ADP-ribosylation of proteins: the ADP-D-ribosyl group of NAD(+) is transferred to the acceptor carboxyl group of target residues and further ADP-ribosyl groups are transferred to the 2'-position of the terminal adenosine moiety, building up a polymer with an average chain length of 20-30 units. Serine ADP-ribosylation of proteins constitutes the primary form of ADP-ribosylation of proteins in response to DNA damage. Specificity for the different amino acids is conferred by interacting factors, such as hpf1 and nmnat1. Following interaction with hpf1, catalyzes serine ADP-ribosylation of target proteins; hpf1 confers serine specificity by completing the parp1 active site. Also catalyzes tyrosine ADP-ribosylation of target proteins following interaction with hpf1. Following interaction with nmnat1, catalyzes glutamate and aspartate ADP-ribosylation of target proteins; nmnat1 confers glutamate and aspartate specificity. Parp1 initiates the repair of DNA breaks: recognizes and binds DNA breaks within chromatin and recruits hpf1, licensing serine ADP-ribosylation of target proteins, such as histones (H2BS6ADPr and H3S10ADPr), thereby promoting decompaction of chromatin and the recruitment of repair factors leading to the reparation of DNA strand breaks. In addition to base excision repair (BER) pathway, also involved in double-strand breaks (DSBs) repair. Mediates the poly-ADP-ribosylation of a number of proteins. In addition to proteins, also able to ADP-ribosylate DNA: catalyzes ADP-ribosylation of DNA strand break termini containing terminal phosphates and a 2'-OH group in single- and double-stranded DNA, respectively. Parp1-mediated DNA repair in neurons plays a role in sleep: senses DNA damage in neurons and promotes sleep, facilitating efficient DNA repair. In addition to DNA repair, also involved in other processes, such as transcription regulation, programmed cell death, membrane repair, adipogenesis and innate immunity. Acts as a repressor of transcription: binds to nucleosomes and modulates chromatin structure in a manner similar to histone H1, thereby altering RNA polymerase II. Acts both as a positive and negative regulator of transcription elongation, depending on the context. Poly-ADP-ribose chains generated by parp1 also play a role in poly-ADP-ribose-dependent cell death, a process named parthanatos. Also acts as a negative regulator of the cGAS-STING pathway by mediating poly-ADP-ribosylation and inactivation of cgas. Acts as a negative regulator of adipogenesis by catalyzing poly ADP-ribosylation of histone H2B on 'Glu-35' (H2BE35ADPr). The sequence is that of Poly [ADP-ribose] polymerase 1 from Danio rerio (Zebrafish).